We begin with the raw amino-acid sequence, 243 residues long: Uridylate kinase (243 aa).

15–18 is a binding site for ATP; sequence KMSG. Residue Gly57 coordinates UMP. 2 residues coordinate ATP: Gly58 and Arg62. UMP contacts are provided by residues Asp77 and 138–145; that span reads TGNPLVTT. Positions 165, 166, 171, and 174 each coordinate ATP.

This sequence belongs to the UMP kinase family. As to quaternary structure, homohexamer.

It is found in the cytoplasm. It carries out the reaction UMP + ATP = UDP + ADP. Its pathway is pyrimidine metabolism; CTP biosynthesis via de novo pathway; UDP from UMP (UMPK route): step 1/1. Its activity is regulated as follows. Inhibited by UTP. Its function is as follows. Catalyzes the reversible phosphorylation of UMP to UDP. This is Uridylate kinase from Coxiella burnetii (strain RSA 493 / Nine Mile phase I).